The following is a 277-amino-acid chain: Small ribosomal subunit protein uS2 (277 aa).

Positions 1–78 (MSENDEGTDA…PADEEPVLDE (78 aa)) are disordered.

It belongs to the universal ribosomal protein uS2 family.

This chain is Small ribosomal subunit protein uS2, found in Natronomonas pharaonis (strain ATCC 35678 / DSM 2160 / CIP 103997 / JCM 8858 / NBRC 14720 / NCIMB 2260 / Gabara) (Halobacterium pharaonis).